The following is a 291-amino-acid chain: MACLSPSQLKKFQEDGFLLLEGFFTADECVAMQQRIGEIVAEMDVPLHCRTEFSTQEDEQLQTQGKTDYFLSSGDKIRFFFEKGVFDEKGNFLVPPEKSINKIGHALHAHDPVFRSITHSPKVQALVRSLGLQMPVVVQSMYIFKQPHFGGEVSPHQDATFLYTEPLGRVLGLWIAMEDAMLENGCLWFIPGSHTRGVSRRMIRAPSDSGPGTSFLGSDPAWASNLFVPLPVRRGGLVLIHGEVVHKSEQNHSDHSRQAYTVHLMEAAGTVWSPGNWLQPTPELPFPPLYS.

T55 bears the Phosphothreonine mark. Residues K102, M141, 156-158, and W174 contribute to the 2-oxoglutarate site; that span reads HQD. The Fe cation site is built by H156 and D158. H246 lines the Fe cation pocket. Residues S248 and R257 each contribute to the 2-oxoglutarate site.

The protein belongs to the PhyH family. PHYHD1 subfamily. The cofactor is Fe cation.

2-oxoglutarate(2OG)-dependent dioxygenase that catalyzes the conversion of 2-oxoglutarate to succinate and CO(2) in an iron-dependent manner. However, does not couple 2OG turnover to the hydroxylation of acyl-coenzyme A derivatives, implying that it is not directly involved in phytanoyl coenzyme-A metabolism. Does not show detectable activity towards fatty acid CoA thioesters. The chain is Phytanoyl-CoA dioxygenase domain-containing protein 1 from Mus musculus (Mouse).